The sequence spans 98 residues: UPF0473 protein LSL_1108 (98 aa).

The protein belongs to the UPF0473 family.

The sequence is that of UPF0473 protein LSL_1108 from Ligilactobacillus salivarius (strain UCC118) (Lactobacillus salivarius).